Here is a 62-residue protein sequence, read N- to C-terminus: DNA-directed RNA polymerase subunit omega (62 aa).

The protein belongs to the RNA polymerase subunit omega family. The RNAP catalytic core consists of 2 alpha, 1 beta, 1 beta' and 1 omega subunit. When a sigma factor is associated with the core the holoenzyme is formed, which can initiate transcription.

The catalysed reaction is RNA(n) + a ribonucleoside 5'-triphosphate = RNA(n+1) + diphosphate. Functionally, promotes RNA polymerase assembly. Latches the N- and C-terminal regions of the beta' subunit thereby facilitating its interaction with the beta and alpha subunits. This Wigglesworthia glossinidia brevipalpis protein is DNA-directed RNA polymerase subunit omega.